The sequence spans 405 residues: Elongation factor Tu (405 aa).

The tr-type G domain occupies 10-215 (KPHVNVGTIG…AIDAYIPTPE (206 aa)). Positions 19–26 (GHVDHGKT) are G1. 19–26 (GHVDHGKT) contributes to the GTP binding site. Thr26 contributes to the Mg(2+) binding site. The segment at 61–65 (GITIN) is G2. The G3 stretch occupies residues 82–85 (DCPG). GTP is bound by residues 82-86 (DCPGH) and 137-140 (NKVD). The tract at residues 137 to 140 (NKVD) is G4. Positions 175-177 (SAL) are G5.

The protein belongs to the TRAFAC class translation factor GTPase superfamily. Classic translation factor GTPase family. EF-Tu/EF-1A subfamily. As to quaternary structure, monomer.

The protein localises to the cytoplasm. The catalysed reaction is GTP + H2O = GDP + phosphate + H(+). GTP hydrolase that promotes the GTP-dependent binding of aminoacyl-tRNA to the A-site of ribosomes during protein biosynthesis. The chain is Elongation factor Tu from Deinococcus geothermalis (strain DSM 11300 / CIP 105573 / AG-3a).